Here is a 475-residue protein sequence, read N- to C-terminus: MNGPSSRSSHLSQPVVKSVLVYRNGDPFFAGRRVVIHEKKVSSFDVFLKEVTGGVQAPFGAVRNIYTPRTGHRIRKLDQIESGGNYVAGGPEAFKKLNYLDIGEIKKRPMEAVNTEVKPVIHSRINVSARFRKSLHEPCTIFLIANGDLISPASRLLIPKKALNQWDHVLQMVTEKITLRSGAVHRLYTLEGKLVESGAELENGQFYVAVGRDKFKRLPYSELLFDKSAMRRPYGQKASSLPPMVGSRKSKGSGNYRQSKSTIGSSDNSSPQPLKRKGKKDSNSEKPTKVKQSVKSKTSHQAIPDNGEGIFKAGAERSETRGAAEVQEDEDTQVEVPVDQRPAEIVDEEEDGEKTSKDANQKEDFSAMNGETEDRGGSKAAGTSEQEEGIPDHGEKKSSPSRVNGGTDEENGEELDQVAEELQPTEDEKGKAEGDNSGQDEAGLDAQRPPRPEVTVTSPQENEENEANKASSAVA.

Doublecortin domains lie at 17 to 100 (KSVL…LNYL) and 139 to 221 (CTIF…LPYS). Residues 234 to 475 (YGQKASSLPP…EANKASSAVA (242 aa)) are disordered. Residues 252 to 272 (GSGNYRQSKSTIGSSDNSSPQ) show a composition bias toward polar residues. Residue Ser270 is modified to Phosphoserine. A compositionally biased stretch (basic and acidic residues) spans 353 to 365 (EKTSKDANQKEDF). Positions 407–425 (TDEENGEELDQVAEELQPT) are enriched in acidic residues.

In terms of assembly, interacts with DVL1, DVL2 and DVL3. As to expression, expressed in hair cells of the inner ear.

It is found in the cell projection. It localises to the cilium. The protein resides in the cytoplasm. The protein localises to the cytoskeleton. Its subcellular location is the cilium axoneme. It is found in the kinocilium. In terms of biological role, protein that plays a role in the inhibition of canonical Wnt signaling pathway. May be involved in neuronal migration during development of the cerebral neocortex. Involved in the control of ciliogenesis and ciliary length. The chain is Doublecortin domain-containing protein 2 (Dcdc2) from Mus musculus (Mouse).